The primary structure comprises 381 residues: Estradiol 17-beta-dehydrogenase 2 (381 aa).

The chain crosses the membrane as a helical; Signal-anchor for type II membrane protein span at residues 4-24 (FSSESAWLCLTATAVLGGMLL). 83 to 112 (QKAVLVTGADSGFGHALAKHLDKLGFTVFA) serves as a coordination point for NAD(+). Residue S220 coordinates substrate. Catalysis depends on Y233, which acts as the Proton acceptor.

Belongs to the short-chain dehydrogenases/reductases (SDR) family. Homodimer. Highly expressed in the placenta, and in the small intestine, and liver.

It localises to the endoplasmic reticulum membrane. It carries out the reaction 17beta-estradiol + NAD(+) = estrone + NADH + H(+). The catalysed reaction is testosterone + NAD(+) = androst-4-ene-3,17-dione + NADH + H(+). The enzyme catalyses 17beta-hydroxy-5alpha-androstan-3-one + NAD(+) = 5alpha-androstan-3,17-dione + NADH + H(+). It catalyses the reaction (20S)-hydroxypregn-4-en-3-one + NAD(+) = progesterone + NADH + H(+). Functionally, catalyzes the NAD-dependent oxidation of highly active 17beta-hydroxysteroids, such as estradiol (E2), testosterone (T), and dihydrotestosterone (DHT), to their less active forms and thus regulates the biological potency of these steroids. Oxidizes estradiol to estrone, testosterone to androstenedione, and dihydrotestosterone to 5alpha-androstan-3,17-dione. Also has 20-alpha-HSD activity. The chain is Estradiol 17-beta-dehydrogenase 2 (Hsd17b2) from Rattus norvegicus (Rat).